Here is a 179-residue protein sequence, read N- to C-terminus: Large ribosomal subunit protein uL5 (179 aa).

The protein belongs to the universal ribosomal protein uL5 family. Part of the 50S ribosomal subunit; part of the 5S rRNA/L5/L18/L25 subcomplex. Contacts the 5S rRNA and the P site tRNA. Forms a bridge to the 30S subunit in the 70S ribosome.

Functionally, this is one of the proteins that bind and probably mediate the attachment of the 5S RNA into the large ribosomal subunit, where it forms part of the central protuberance. In the 70S ribosome it contacts protein S13 of the 30S subunit (bridge B1b), connecting the 2 subunits; this bridge is implicated in subunit movement. Contacts the P site tRNA; the 5S rRNA and some of its associated proteins might help stabilize positioning of ribosome-bound tRNAs. The sequence is that of Large ribosomal subunit protein uL5 from Pectobacterium carotovorum subsp. carotovorum (strain PC1).